Consider the following 161-residue polypeptide: MKRFSDKRTQIKTVMATGTFDIIHPGHGFFLEEAKKLGGENARLVVVLARDSTVRARKRTPIIGEKQRLEVVMMLKPVDEAYLGSETDMFEIVHRLKPDIIAIGPDQKFDIDELRDELRRRGLECEVKRVGKYRRSELDSTCKIIKKIRKMEFDEDALKNC.

Residues 19-20, 24-27, Asp-106, and Tyr-133 contribute to the ATP site; these read TF and HPGH.

This sequence belongs to the archaeal FAD synthase family. In terms of assembly, homodimer. Requires a divalent metal cation as cofactor.

It catalyses the reaction FMN + ATP + H(+) = FAD + diphosphate. The protein operates within cofactor biosynthesis; FAD biosynthesis; FAD from FMN: step 1/1. In terms of biological role, catalyzes the transfer of the AMP portion of ATP to flavin mononucleotide (FMN) to produce flavin adenine dinucleotide (FAD) coenzyme. The protein is FAD synthase of Methanothermobacter marburgensis (strain ATCC BAA-927 / DSM 2133 / JCM 14651 / NBRC 100331 / OCM 82 / Marburg) (Methanobacterium thermoautotrophicum).